A 123-amino-acid chain; its full sequence is Large ribosomal subunit protein bL12 (123 aa).

This sequence belongs to the bacterial ribosomal protein bL12 family. As to quaternary structure, homodimer. Part of the ribosomal stalk of the 50S ribosomal subunit. Forms a multimeric L10(L12)X complex, where L10 forms an elongated spine to which 2 to 4 L12 dimers bind in a sequential fashion. Binds GTP-bound translation factors.

Forms part of the ribosomal stalk which helps the ribosome interact with GTP-bound translation factors. Is thus essential for accurate translation. The chain is Large ribosomal subunit protein bL12 from Burkholderia vietnamiensis (strain G4 / LMG 22486) (Burkholderia cepacia (strain R1808)).